A 451-amino-acid chain; its full sequence is Chromosomal replication initiator protein DnaA (451 aa).

The interval 1–71 (MSEKEIWDKV…QAIIYDVIGY (71 aa)) is domain I, interacts with DnaA modulators. The domain II stretch occupies residues 71 to 112 (YEVKPHFISEDELASYNNVNTQEVQEPQVQHSSIDDKTWGKE). A domain III, AAA+ region region spans residues 113–329 (QFNMHNTFDT…GALTRLLAYS (217 aa)). Residues Gly-157, Gly-159, Lys-160, and Thr-161 each contribute to the ATP site. Positions 330 to 451 (KLQGKPITTE…ENLEKEIRNQ (122 aa)) are domain IV, binds dsDNA.

It belongs to the DnaA family. In terms of assembly, oligomerizes as a right-handed, spiral filament on DNA at oriC.

The protein resides in the cytoplasm. Plays an essential role in the initiation and regulation of chromosomal replication. ATP-DnaA binds to the origin of replication (oriC) to initiate formation of the DNA replication initiation complex once per cell cycle. Binds the DnaA box (a 9 base pair repeat at the origin) and separates the double-stranded (ds)DNA. Forms a right-handed helical filament on oriC DNA; dsDNA binds to the exterior of the filament while single-stranded (ss)DNA is stabiized in the filament's interior. The ATP-DnaA-oriC complex binds and stabilizes one strand of the AT-rich DNA unwinding element (DUE), permitting loading of DNA polymerase. After initiation quickly degrades to an ADP-DnaA complex that is not apt for DNA replication. Binds acidic phospholipids. This is Chromosomal replication initiator protein DnaA from Staphylococcus epidermidis (strain ATCC 12228 / FDA PCI 1200).